The primary structure comprises 319 residues: Ribosomal RNA small subunit methyltransferase H (319 aa).

S-adenosyl-L-methionine is bound by residues 39 to 41 (GGH), Asp59, Phe83, Asp104, and Gln111.

Belongs to the methyltransferase superfamily. RsmH family.

The protein localises to the cytoplasm. It carries out the reaction cytidine(1402) in 16S rRNA + S-adenosyl-L-methionine = N(4)-methylcytidine(1402) in 16S rRNA + S-adenosyl-L-homocysteine + H(+). In terms of biological role, specifically methylates the N4 position of cytidine in position 1402 (C1402) of 16S rRNA. The sequence is that of Ribosomal RNA small subunit methyltransferase H from Ralstonia pickettii (strain 12D).